The chain runs to 622 residues: Polypeptide N-acetylgalactosaminyltransferase 18 (622 aa).

The Cytoplasmic segment spans residues 1–12 (MVCTRKTKTLVS). The chain crosses the membrane as a helical; Signal-anchor for type II membrane protein span at residues 13-35 (TCVILSGMTNIICLLYVGWVTNY). Residues 36-622 (IASVYVRGQE…ITNVLRSLVS (587 aa)) are Lumenal-facing. Intrachain disulfides connect C144/C392, C383/C462, C497/C513, C545/C558, and C586/C606. N146 carries an N-linked (GlcNAc...) asparagine glycan. The catalytic subdomain A stretch occupies residues 153 to 267 (LPEVSIVFIF…VGWAEPVLTR (115 aa)). D194 lines the substrate pocket. N-linked (GlcNAc...) asparagine glycosylation is present at N195. Residues D251 and H253 each coordinate Mn(2+). N-linked (GlcNAc...) asparagine glycosylation is present at N320. The segment at 324–400 (PIRSPALIGC…PCSRIAHIER (77 aa)) is catalytic subdomain B. Residue H397 participates in Mn(2+) binding. R400 and Y405 together coordinate substrate. A Ricin B-type lectin domain is found at 484 to 614 (AYGVLQNSLK…KCSGQHWTIT (131 aa)).

It belongs to the glycosyltransferase 2 family. GalNAc-T subfamily. Mn(2+) serves as cofactor.

The protein resides in the golgi apparatus membrane. It catalyses the reaction L-seryl-[protein] + UDP-N-acetyl-alpha-D-galactosamine = a 3-O-[N-acetyl-alpha-D-galactosaminyl]-L-seryl-[protein] + UDP + H(+). It carries out the reaction L-threonyl-[protein] + UDP-N-acetyl-alpha-D-galactosamine = a 3-O-[N-acetyl-alpha-D-galactosaminyl]-L-threonyl-[protein] + UDP + H(+). The protein operates within protein modification; protein glycosylation. Catalyzes the initial reaction in O-linked oligosaccharide biosynthesis, the transfer of an N-acetyl-D-galactosamine (GalNAc) residue from UDP-GalNAc to a serine or threonine residue on the protein receptor. In Mus musculus (Mouse), this protein is Polypeptide N-acetylgalactosaminyltransferase 18 (Galnt18).